Consider the following 119-residue polypeptide: Non-structural protein 3b (119 aa).

The 77-residue stretch at 3–79 folds into the DRBM domain; that stretch reads YVSLLNQVWQ…AARKVCLRLQ (77 aa).

As to quaternary structure, interacts with host RUNX1 isoform b.

It localises to the host nucleus. The protein localises to the host nucleolus. Its subcellular location is the host mitochondrion. Induces host cell G0/G1 arrest and apoptosis. In Pipistrellus abramus (Japanese pipistrelle), this protein is Non-structural protein 3b.